A 483-amino-acid chain; its full sequence is Regulatory protein ViaA (483 aa).

It belongs to the ViaA family. Homodimer. Interacts with RavA.

It localises to the cytoplasm. Its function is as follows. Component of the RavA-ViaA chaperone complex, which may act on the membrane to optimize the function of some of the respiratory chains. ViaA stimulates the ATPase activity of RavA. The chain is Regulatory protein ViaA from Shigella flexneri.